The chain runs to 158 residues: Secreted RxLR effector protein 131 (158 aa).

The N-terminal stretch at 1-20 (MRQIPLVVVLLLAYAARLQG) is a signal peptide. Residues 39 to 57 (RDLDGSTTSMSVNVDDEER) carry the RxLR-dEER motif. Residues 120-158 (KGNVKYLAIIYVICILSVLGILGTVFAINRNISNQYIHE) are host BKI1-binding. A helical membrane pass occupies residues 127–147 (AIIYVICILSVLGILGTVFAI). A glycan (N-linked (GlcNAc...) asparagine) is linked at N150.

This sequence belongs to the RxLR effector family. In terms of assembly, interacts with host BKI1.

Its subcellular location is the secreted. The protein localises to the host cell membrane. In terms of biological role, secreted effector that suppresses pathogen-associated molecular pattern (PAMP)-triggered immunity (PTI) in host plants. Suppresses both defense-related brassinosteroid (BR) and ERECTA (ER) signaling pathways in planta by interacting with host BRI1 kinase inhibitor 1 (BKI1) at the host plasma membrane, leading to a host dwarf phenotype. This Plasmopara viticola (Downy mildew of grapevine) protein is Secreted RxLR effector protein 131.